The sequence spans 126 residues: MLTDPIADMLTRIRNAHLALHKEVSVPRSKMKEALAAILKEEGYITDFKMEESSIVIELKYFKGKPVISGLKRISKSGRRVYVGSTDIPRVQNGLGICILSTSSGVLEGTNARSKNVGGELLCEIW.

The protein belongs to the universal ribosomal protein uS8 family. In terms of assembly, part of the 30S ribosomal subunit. Contacts proteins S5 and S12.

In terms of biological role, one of the primary rRNA binding proteins, it binds directly to 16S rRNA central domain where it helps coordinate assembly of the platform of the 30S subunit. The polypeptide is Small ribosomal subunit protein uS8 (Oleidesulfovibrio alaskensis (strain ATCC BAA-1058 / DSM 17464 / G20) (Desulfovibrio alaskensis)).